A 592-amino-acid polypeptide reads, in one-letter code: Aspartate--tRNA(Asp/Asn) ligase (592 aa).

Glutamate 172 provides a ligand contact to L-aspartate. An aspartate region spans residues 196–199; sequence QLFK. Arginine 218 is a binding site for L-aspartate. Residues 218–220 and glutamine 227 each bind ATP; that span reads RDE. Residue histidine 450 coordinates L-aspartate. Glutamate 484 serves as a coordination point for ATP. An L-aspartate-binding site is contributed by arginine 491. 536–539 is a binding site for ATP; sequence GLDR.

The protein belongs to the class-II aminoacyl-tRNA synthetase family. Type 1 subfamily. As to quaternary structure, homodimer.

It is found in the cytoplasm. It carries out the reaction tRNA(Asx) + L-aspartate + ATP = L-aspartyl-tRNA(Asx) + AMP + diphosphate. Functionally, aspartyl-tRNA synthetase with relaxed tRNA specificity since it is able to aspartylate not only its cognate tRNA(Asp) but also tRNA(Asn). Reaction proceeds in two steps: L-aspartate is first activated by ATP to form Asp-AMP and then transferred to the acceptor end of tRNA(Asp/Asn). This Thioalkalivibrio sulfidiphilus (strain HL-EbGR7) protein is Aspartate--tRNA(Asp/Asn) ligase.